Consider the following 7182-residue polypeptide: Replicase polyprotein 1ab (7182 aa).

The CoV Nsp1 globular domain occupies 54–174 (YDNHVKIDCR…HKWFQFCRLY (121 aa)). Positions 192-222 (FSVEDAYAEVHAEPKGKYSQKAYALLRQYRG) constitute a BetaCoV Nsp1 C-terminal domain. The 263-residue stretch at 226–488 (VLFVDQYGCD…LITHALYLDY (263 aa)) folds into the CoV Nsp2 N-terminal domain. 4 residues coordinate Zn(2+): Cys365, Cys370, Cys386, and Cys389. The segment at 365 to 389 (CFNDNCDFYGWVSGNMMDGFSCPLC) is C4. The region spanning 493–681 (CGNLEQNHIL…VNKFYTFFKL (189 aa)) is the CoV Nsp2 middle domain. The region spanning 697–809 (LKTINGLVCI…LDQAWRFPCA (113 aa)) is the CoV Nsp2 C-terminal domain. Positions 811-923 (RKVNFNEKPV…MYCTFAIEDV (113 aa)) constitute a Ubiquitin-like 1 domain. Tandem repeats lie at residues 945 to 954 (NDDEDVVTGD), 955 to 964 (NDDEDVVTGD), 965 to 974 (NDDEDVVTGD), 975 to 984 (NDDEDVVTGD), 985 to 994 (NDDEDVVTGD), 995 to 1004 (NDDEDVVTGD), 1005 to 1014 (NDDEDVVTGD), 1015 to 1024 (NDDEDVVTGD), 1025 to 1034 (NDDEDVVTGD), 1035 to 1044 (NDDEDVVTGD), 1045 to 1054 (NDDEDVVTGD), 1055 to 1064 (NDDEDVVTGD), 1065 to 1074 (NDDEDVVTGD), and 1075 to 1084 (NDDEDVVTGD). The interval 945–1084 (NDDEDVVTGD…NDDEDVVTGD (140 aa)) is 14 X 10 AA tandem repeat of N-[DN]-D-E-D-V-V-T-G-D. Residues 946 to 1064 (DDEDVVTGDN…NDDEDVVTGD (119 aa)) form a disordered region. The region spanning 1123 to 1373 (VFNDVYNDAL…VCFVKGDIIN (251 aa)) is the Peptidase C16 1 domain. Cys1161 functions as the For PL1-PRO activity in the catalytic mechanism. 4 residues coordinate Zn(2+): Cys1238, Cys1241, Cys1264, and Cys1266. The segment at 1238–1266 (CLKCGFSFDLNGLDALFFYGDIVSHVCKC) adopts a C4-type 1 zinc-finger fold. Active-site for PL1-PRO activity residues include His1312 and Asp1323. The Macro domain occupies 1351 to 1522 (ELPQLYGLCI…IIQKCQITSV (172 aa)). Residues 1578 to 1649 (NDVRDYLLSK…TVNQVCVLLA (72 aa)) enclose the DPUP domain. A Ubiquitin-like 2 domain is found at 1649–1704 (AKKIDVLLTVDGVNFKSISLTVGEVFGKILGNVFCDGIDVTKLKCSDFYADKILYQ). The region spanning 1718 to 1978 (SSFGFDQQQL…MVAYNPDLSQ (261 aa)) is the Peptidase C16 2 domain. The active-site For PL2-PRO activity is the Cys1757. Zn(2+)-binding residues include Cys1835, Cys1837, Cys1869, and Cys1871. Residues 1835 to 1871 (CDCGIKQESRVGVDAVMHFGTLAKTDLFNGYKIGCNC) form a C4-type 2 zinc finger. Active-site for PL2-PRO activity residues include His1914 and Asp1928. A Nucleic acid-binding domain is found at 1992–2093 (IKAQFKPFAK…TYFNKPSFKS (102 aa)). The region spanning 2108 to 2257 (ESQGNVVTSV…NDKTIFYTTE (150 aa)) is the G2M domain. Helical transmembrane passes span 2226-2246 (AIEF…LLHF), 2287-2307 (FLVV…NVIF), and 2318-2338 (FPIF…LVTI). The tract at residues 2226–2463 (AIEFYGFLKW…FVLLRFYIVV (238 aa)) is HD1. The 62-residue stretch at 2323–2384 (GRIVMWIKAT…AIDFVQYEVD (62 aa)) folds into the 3Ecto domain. 2 disulfides stabilise this stretch: Cys2339-Cys2363 and Cys2354-Cys2360. Transmembrane regions (helical) follow at residues 2401–2421 (LVIG…LIGL) and 2443–2463 (FIVF…YIVV). The tract at residues 2471 to 2561 (GFIRHIVYGC…ELKRPVNPTD (91 aa)) is Y1. The 368-residue stretch at 2471–2838 (GFIRHIVYGC…LTTPFSLKGG (368 aa)) folds into the CoV Nsp3 Y domain. Residues His2475, Cys2480, Cys2485, Cys2488, Cys2521, His2524, Cys2528, and Cys2531 each contribute to the Zn(2+) site. Positions 2475 to 2488 (HIVYGCNKAGCLFC) are ZF1. Residues 2521–2531 (CVKHQWNCFNC) form a ZF2 region. The segment at 2562 to 2654 (ASHYVVTDIK…LVDKKLITTA (93 aa)) is Y2. The interval 2562–2838 (ASHYVVTDIK…LTTPFSLKGG (277 aa)) is coV-Y. Positions 2655 to 2737 (CNGISVTQTM…KSMISAVAAG (83 aa)) are Y3. The interval 2738–2838 (LEFTDENYNN…LTTPFSLKGG (101 aa)) is Y4. A run of 5 helical transmembrane segments spans residues 2844 to 2864 (LLYI…ALLP), 3119 to 3139 (ASSI…YYLI), 3151 to 3171 (VVVI…VFQV), 3178 to 3198 (VYAC…SVIM), and 3203 to 3223 (IVMY…AMVI). Residues 2844-3223 (LLYILFFVSL…FCVTYVAMVI (380 aa)) form an HD2 region. The region spanning 3237-3334 (IGVNVCSDST…TASVSTSFLQ (98 aa)) is the Nsp4C domain. The region spanning 3335–3637 (SGIVKMVSPT…YQQLAGVKLQ (303 aa)) is the Peptidase C30 domain. Residues His3375 and Cys3479 each act as for 3CL-PRO activity in the active site. 7 helical membrane passes run 3651–3671 (ILIS…WTIF), 3676–3696 (THMI…MLLV), 3701–3721 (FYLT…NYLV), 3744–3764 (FTYV…IFIT), 3772–3792 (IFSL…WYFG), 3800–3820 (LLFI…SLAI), and 3843–3863 (LILL…GFFS). The tract at residues 3651 to 3863 (ILISTFLFSC…ILSCYWGFFS (213 aa)) is HD3. A RdRp Nsp7 cofactor domain is found at 3925-4013 (SKLTDVKCAN…DYVQDSTVLQ (89 aa)). Residues 4014 to 4210 (ALQSEFVNMA…YNEVANAVMQ (197 aa)) enclose the RdRp Nsp8 cofactor domain. The 110-residue stretch at 4211–4320 (NNELMPHKLK…GTLSSTIRLQ (110 aa)) folds into the Nsp9 ssRNA-binding domain. Residues 4321–4458 (AGVATEYAAN…CVGSSVAVQS (138 aa)) enclose the ExoN/MTase coactivator domain. 8 residues coordinate Zn(2+): Cys4394, Cys4397, His4403, Cys4410, Cys4436, Cys4439, Cys4447, and Cys4449. Zinc fingers lie at residues 4394 to 4410 (CIYC…DGIC) and 4436 to 4449 (CQVC…SCSC). One can recognise a NiRAN domain in the interval 4463–4718 (FLNRVRGTSV…DCELFVNDSY (256 aa)). Asn4666 and Asp4675 together coordinate Mn(2+). One can recognise a Nsp12 Interface domain in the interval 4719 to 4817 (RQFDLVQYDF…MNLDVDTHRY (99 aa)). Residues His4748, Cys4754, Cys4759, Cys4763, and Cys4940 each contribute to the Zn(2+) site. The Nsp12 RNA-dependent RNA polymerase domain occupies 4818 to 5385 (RLSLKDLLLY…NMYLKSAVMQ (568 aa)). The interval 4820–5034 (SLKDLLLYAA…HQKCLKSIAA (215 aa)) is rdRp Fingers N-ter. The segment at 5035-5073 (TRGVPVVIGTTKFYGGWDDMLRHLIKDVDNPVLMGWDYP) is rdRp Palm N-ter. The RdRp catalytic domain occupies 5065–5227 (PVLMGWDYPK…CYNSDYASKG (163 aa)). Residues 5074-5132 (KCDRAMPNILRIVSSLVLARKHEFCCSHGDRFYRLANECAQVLSEIVMCGGCYYVKPGG) form a rdRp Fingers C-ter region. Zn(2+) is bound by residues His5095, Cys5098, and Cys5099. The rdRp Palm C-ter stretch occupies residues 5133–5268 (TSSGDATTAF…TNGPHEFCSQ (136 aa)). Catalysis depends on residues Ser5212, Asp5213, and Asp5214. A rdRp Thumb region spans residues 5269-5385 (HTMLVKIDGD…NMYLKSAVMQ (117 aa)). Positions 5386-5498 (SVGACVVCSS…DDFNKIASCK (113 aa)) constitute a CV ZBD domain. Cys5390, Cys5393, Cys5401, Cys5404, Cys5411, Cys5414, His5418, His5424, Cys5435, Cys5440, Cys5457, and His5460 together coordinate Zn(2+). The 182-residue stretch at 5641-5822 (SVPLVFQNNV…MCCLGPDIFL (182 aa)) folds into the (+)RNA virus helicase ATP-binding domain. An ATP-binding site is contributed by 5666–5673 (GPPGTGKS). One can recognise a (+)RNA virus helicase C-terminal domain in the interval 5823 to 5992 (GNCYRCPKEI…TLPRLHCTTN (170 aa)). Positions 6059 to 6274 (LFITKDEAIK…RCLAIYDCFC (216 aa)) constitute an ExoN domain. Active-site residues include Asp6077, Glu6079, and Glu6178. Cys6194, Cys6197, Cys6213, His6216, His6244, Cys6248, and His6251 together coordinate Zn(2+). Active-site residues include His6255 and Asp6260. Cys6266 provides a ligand contact to Zn(2+). The region spanning 6283-6509 (YPIISNEVSI…NLWNTFTTLQ (227 aa)) is the N7-MTase domain. 6318 to 6324 (DIGNPKG) is a binding site for S-adenosyl-L-methionine. Residues 6396–6410 (CNGGSLYVNKHAFHT) form a gpppA-binding region. Zn(2+) is bound by residues Cys6434, Cys6455, Cys6466, and His6469. The region spanning 6510–6570 (SLENVIYNLV…NIAVELFTKR (61 aa)) is the Nsp15 N-terminal oligomerization domain. An AV-Nsp11N/CoV-Nsp15M domain is found at 6571-6691 (SIRHHPELKI…FAMRKDGDDV (121 aa)). Residues 6741 to 6880 (EPRSDLERDF…NDNKIMTFYP (140 aa)) enclose the NendoU domain. Active-site residues include His6771, His6786, Lys6826, Lys6929, Asp7013, Lys7053, and Glu7086. A Nidovirus-type SAM-dependent 2'-O-MTase domain is found at 6885–7179 (TNDWKPGYSM…KEIFVGDSLV (295 aa)).

The protein belongs to the coronaviruses polyprotein 1ab family. Interacts with host PHB and PHB2. In terms of assembly, interacts with papain-like protease nsp3 and non-structural protein 6. As to quaternary structure, monomer. Homodimer. Only the homodimer shows catalytic activity. Interacts with nsp8 and nsp12 to form the replication-transcription complex (RTC): nsp12, nsp7, two subunits of nsp8, and up to two subunits of nsp13. In terms of assembly, interacts with nsp7, nsp13 and nsp12 to form the replication-transcription complex (RTC): nsp12, nsp7, two subunits of nsp8, and up to two subunits of nsp13. As to quaternary structure, interacts with nsp12. Interacts with proofreading exoribonuclease nsp14 and 2'-O-methyltransferase nsp16; these interactions enhance nsp14 and nsp16 enzymatic activities. In terms of assembly, interacts with nsp7 and nsp8 to form the replication-transcription complex (RTC): nsp12, nsp7, two subunits of nsp8, and up to two subunits of nsp13. Interacts with nsp9. As to quaternary structure, interacts with nsp8 to form the replication-transcription complex (RTC): nsp12, nsp7, two subunits of nsp8, and up to two subunits of nsp13. It depends on Mn(2+) as a cofactor. The cofactor is Mg(2+). In terms of processing, specific enzymatic cleavages in vivo by its own proteases yield mature proteins. 3CL-PRO and PL-PRO proteinases are autocatalytically processed.

The protein resides in the host membrane. The protein localises to the host cytoplasm. It localises to the host perinuclear region. It is found in the host endoplasmic reticulum-Golgi intermediate compartment. It carries out the reaction RNA(n) + a ribonucleoside 5'-triphosphate = RNA(n+1) + diphosphate. The enzyme catalyses ATP + H2O = ADP + phosphate + H(+). The catalysed reaction is Thiol-dependent hydrolysis of ester, thioester, amide, peptide and isopeptide bonds formed by the C-terminal Gly of ubiquitin (a 76-residue protein attached to proteins as an intracellular targeting signal).. It catalyses the reaction a 5'-end (N(7)-methyl 5'-triphosphoguanosine)-ribonucleoside in mRNA + S-adenosyl-L-methionine = a 5'-end (N(7)-methyl 5'-triphosphoguanosine)-(2'-O-methyl-ribonucleoside) in mRNA + S-adenosyl-L-homocysteine + H(+). It carries out the reaction uridylyl-uridylyl-ribonucleotide-RNA = a 3'-end uridylyl-2',3'-cyclophospho-uridine-RNA + a 5'-end dephospho-ribonucleoside-RNA. The enzyme catalyses a 5'-end diphospho-ribonucleoside in mRNA + GTP + H(+) = a 5'-end (5'-triphosphoguanosine)-ribonucleoside in mRNA + diphosphate. The catalysed reaction is a 5'-end (5'-triphosphoguanosine)-ribonucleoside in mRNA + S-adenosyl-L-methionine = a 5'-end (N(7)-methyl 5'-triphosphoguanosine)-ribonucleoside in mRNA + S-adenosyl-L-homocysteine. In terms of biological role, the replicase polyprotein of coronaviruses is a multifunctional protein: it contains the activities necessary for the transcription of negative stranded RNA, leader RNA, subgenomic mRNAs and progeny virion RNA as well as proteinases responsible for the cleavage of the polyprotein into functional products. Functionally, inhibits host translation by interacting with the 40S ribosomal subunit. The nsp1-40S ribosome complex further induces an endonucleolytic cleavage near the 5'UTR of host mRNAs, targeting them for degradation. Viral mRNAs are not susceptible to nsp1-mediated endonucleolytic RNA cleavage thanks to the presence of a 5'-end leader sequence and are therefore protected from degradation. By suppressing host gene expression, nsp1 facilitates efficient viral gene expression in infected cells and evasion from host immune response. May play a role in the modulation of host cell survival signaling pathway by interacting with host PHB and PHB2. Indeed, these two proteins play a role in maintaining the functional integrity of the mitochondria and protecting cells from various stresses. Its function is as follows. Responsible for the cleavages located at the N-terminus of the replicase polyprotein. In addition, PL-PRO possesses a deubiquitinating/deISGylating activity and processes both 'Lys-48'- and 'Lys-63'-linked polyubiquitin chains from cellular substrates. Participates together with nsp4 in the assembly of virally-induced cytoplasmic double-membrane vesicles necessary for viral replication. Antagonizes innate immune induction of type I interferon by blocking the phosphorylation, dimerization and subsequent nuclear translocation of host IRF3. Also prevents host NF-kappa-B signaling. In terms of biological role, participates in the assembly of virally-induced cytoplasmic double-membrane vesicles necessary for viral replication. Functionally, cleaves the C-terminus of replicase polyprotein at 11 sites. Recognizes substrates containing the core sequence [ILMVF]-Q-|-[SGACN]. Also able to bind an ADP-ribose-1''-phosphate (ADRP). Plays a role in the initial induction of autophagosomes from host endoplasmic reticulum. Later, limits the expansion of these phagosomes that are no longer able to deliver viral components to lysosomes. Its function is as follows. Forms a hexadecamer with nsp8 (8 subunits of each) that may participate in viral replication by acting as a primase. Alternatively, may synthesize substantially longer products than oligonucleotide primers. In terms of biological role, forms a hexadecamer with nsp7 (8 subunits of each) that may participate in viral replication by acting as a primase. Alternatively, may synthesize substantially longer products than oligonucleotide primers. Functionally, forms a primer, NSP9-pU, which is utilized by the polymerase for the initiation of RNA chains. Interacts with ribosome signal recognition particle RNA (SRP). Together with NSP8, suppress protein integration into the cell membrane, thereby disrupting host immune defenses. Plays a pivotal role in viral transcription by stimulating both nsp14 3'-5' exoribonuclease and nsp16 2'-O-methyltransferase activities. Therefore plays an essential role in viral mRNAs cap methylation. Its function is as follows. RNA-directed RNA polymerase that catalyzes the transcription of viral genomic and subgenomic RNAs. Acts in complex with nsp7 and nsp8 to transcribe both the minus and positive strands of genomic RNA. The kinase-like NiRAN domain of NSP12 attaches one or more nucleotides to the amino terminus of NSP9, forming a covalent RNA-protein intermediate that serves as transcription/replication primer. Subgenomic RNAs (sgRNAs) are formed by discontinuous transcription: The polymerase has the ability to pause at transcription-regulating sequences (TRS) and jump to the leader TRS, resulting in a major deletion. This creates a series of subgenomic RNAs that are replicated, transcribed and translated. In addition, Nsp12 is a subunit of the viral RNA capping enzyme that catalyzes the RNA guanylyltransferase reaction for genomic and sub-genomic RNAs. Subsequently, the NiRAN domain transfers RNA to GDP, and forms the core cap structure GpppA-RNA. In terms of biological role, multi-functional protein with a zinc-binding domain in N-terminus displaying RNA and DNA duplex-unwinding activities with 5' to 3' polarity. Activity of helicase is dependent on magnesium. Functionally, plays a role in viral RNA synthesis through two distinct activities. The N7-guanine methyltransferase activity plays a role in the formation of the cap structure GpppA-RNA. The proofreading exoribonuclease reduces the sensitivity of the virus to RNA mutagens during replication. This activity acts on both ssRNA and dsRNA in a 3'-5' direction. Plays a role in viral transcription/replication and prevents the simultaneous activation of host cell dsRNA sensors, such as MDA5/IFIH1, OAS, and PKR. Acts by degrading the 5'-polyuridines generated during replication of the poly(A) region of viral genomic and subgenomic RNAs. Catalyzes a two-step reaction in which a 2'3'-cyclic phosphate (2'3'-cP) is first generated by 2'-O transesterification, which is then hydrolyzed to a 3'-phosphate (3'-P). If not degraded, poly(U) RNA would hybridize with poly(A) RNA tails and activate host dsRNA sensors. Its function is as follows. Methyltransferase that mediates mRNA cap 2'-O-ribose methylation to the 5'-cap structure of viral mRNAs. N7-methyl guanosine cap is a prerequisite for binding of nsp16. Therefore plays an essential role in viral mRNAs cap methylation which is essential to evade immune system. This chain is Replicase polyprotein 1ab (rep), found in Human coronavirus HKU1 (isolate N1) (HCoV-HKU1).